The sequence spans 321 residues: Probable proline iminopeptidase (321 aa).

Residues 35-296 (KPVVFLHGGP…IVVPDAGHSM (262 aa)) form the AB hydrolase-1 domain. The active-site Nucleophile is S110. D266 is an active-site residue. H294 serves as the catalytic Proton donor.

The protein belongs to the peptidase S33 family.

Its subcellular location is the cytoplasm. The enzyme catalyses Release of N-terminal proline from a peptide.. Its function is as follows. Specifically catalyzes the removal of N-terminal proline residues from peptides. In Leptolyngbya boryana (Plectonema boryanum), this protein is Probable proline iminopeptidase (pip).